A 419-amino-acid chain; its full sequence is UDP-N-acetylglucosamine 1-carboxyvinyltransferase (419 aa).

Position 22-23 (22-23 (KN)) interacts with phosphoenolpyruvate. Residue arginine 93 participates in UDP-N-acetyl-alpha-D-glucosamine binding. Catalysis depends on cysteine 117, which acts as the Proton donor. A 2-(S-cysteinyl)pyruvic acid O-phosphothioketal modification is found at cysteine 117. UDP-N-acetyl-alpha-D-glucosamine contacts are provided by aspartate 307 and isoleucine 329.

It belongs to the EPSP synthase family. MurA subfamily.

It is found in the cytoplasm. The enzyme catalyses phosphoenolpyruvate + UDP-N-acetyl-alpha-D-glucosamine = UDP-N-acetyl-3-O-(1-carboxyvinyl)-alpha-D-glucosamine + phosphate. It participates in cell wall biogenesis; peptidoglycan biosynthesis. Its function is as follows. Cell wall formation. Adds enolpyruvyl to UDP-N-acetylglucosamine. In Shewanella sediminis (strain HAW-EB3), this protein is UDP-N-acetylglucosamine 1-carboxyvinyltransferase.